Consider the following 288-residue polypeptide: Phosphatidylserine decarboxylase proenzyme (288 aa).

Catalysis depends on charge relay system; for autoendoproteolytic cleavage activity residues D92, H149, and S254. S254 acts as the Schiff-base intermediate with substrate; via pyruvic acid; for decarboxylase activity in catalysis. Residue S254 is modified to Pyruvic acid (Ser); by autocatalysis.

Belongs to the phosphatidylserine decarboxylase family. PSD-B subfamily. Prokaryotic type I sub-subfamily. Heterodimer of a large membrane-associated beta subunit and a small pyruvoyl-containing alpha subunit. The cofactor is pyruvate. Post-translationally, is synthesized initially as an inactive proenzyme. Formation of the active enzyme involves a self-maturation process in which the active site pyruvoyl group is generated from an internal serine residue via an autocatalytic post-translational modification. Two non-identical subunits are generated from the proenzyme in this reaction, and the pyruvate is formed at the N-terminus of the alpha chain, which is derived from the carboxyl end of the proenzyme. The autoendoproteolytic cleavage occurs by a canonical serine protease mechanism, in which the side chain hydroxyl group of the serine supplies its oxygen atom to form the C-terminus of the beta chain, while the remainder of the serine residue undergoes an oxidative deamination to produce ammonia and the pyruvoyl prosthetic group on the alpha chain. During this reaction, the Ser that is part of the protease active site of the proenzyme becomes the pyruvoyl prosthetic group, which constitutes an essential element of the active site of the mature decarboxylase.

The protein resides in the cell membrane. It carries out the reaction a 1,2-diacyl-sn-glycero-3-phospho-L-serine + H(+) = a 1,2-diacyl-sn-glycero-3-phosphoethanolamine + CO2. Its pathway is phospholipid metabolism; phosphatidylethanolamine biosynthesis; phosphatidylethanolamine from CDP-diacylglycerol: step 2/2. Catalyzes the formation of phosphatidylethanolamine (PtdEtn) from phosphatidylserine (PtdSer). The chain is Phosphatidylserine decarboxylase proenzyme from Bordetella petrii (strain ATCC BAA-461 / DSM 12804 / CCUG 43448).